The chain runs to 181 residues: Nucleoside triphosphate/diphosphate phosphatase (181 aa).

R26 acts as the Proton donor in catalysis. 6 residues coordinate Mg(2+): N90, D106, D108, D110, D123, and E126.

Belongs to the Ntdp family. Mg(2+) is required as a cofactor.

It carries out the reaction a ribonucleoside 5'-triphosphate + H2O = a ribonucleoside 5'-diphosphate + phosphate + H(+). The catalysed reaction is a ribonucleoside 5'-diphosphate + H2O = a ribonucleoside 5'-phosphate + phosphate + H(+). Its function is as follows. Has nucleoside phosphatase activity towards nucleoside triphosphates and nucleoside diphosphates. The sequence is that of Nucleoside triphosphate/diphosphate phosphatase from Staphylococcus carnosus (strain TM300).